A 74-amino-acid chain; its full sequence is uncharacterized protein (74 aa).

This is an uncharacterized protein from Treponema pallidum (strain Nichols).